The chain runs to 189 residues: Tumor protein p53-inducible protein 11 (189 aa).

The Cytoplasmic segment spans residues 1–63; the sequence is MAGKQPPPLM…FAVREPLGLR (63 aa). The residue at position 14 (serine 14) is a Phosphoserine. The chain crosses the membrane as a helical span at residues 64 to 84; that stretch reads VWQFLSAMLFSSVAIMALALP. Topologically, residues 85–108 are extracellular; sequence DQLYDAVFDGAEVTSKTPIRLYGG. A helical membrane pass occupies residues 109-129; the sequence is ALLSISLIMWNALYTAEKVII. Position 130 (arginine 130) is a topological domain, cytoplasmic. Residues 131 to 151 form a helical membrane-spanning segment; sequence WTLLTEACYFGVQSLVVTATL. The Extracellular portion of the chain corresponds to 152-155; sequence AETG. Residues 156 to 176 form a helical membrane-spanning segment; sequence LMSLGTVLLLASRLLFVIVSI. Residues 177-189 are Cytoplasmic-facing; sequence YYYYQVGRKPKKV.

Its subcellular location is the membrane. The polypeptide is Tumor protein p53-inducible protein 11 (Trp53i11) (Mus musculus (Mouse)).